Here is a 396-residue protein sequence, read N- to C-terminus: MRISIKKILDNESTAGIFLLAAAVFALIFSNVGFLHDIYRHFLELPIVIGVSDYKLDKPLEFWVNDALMAIFFFSIGLELKRERIEGQLRHFSQVFLPSFAAIGGVIFPAVIFAVINFSDSHALRGWAIPTATDIAFAVGVMALLGRRIPTSLKIFVLTLAIMDDLCAIVIIALFYSTALNFTYLGLAFVCFLVLLVMCKLKIPQKIPFVIMSILLWIFVLHSGIHATIAGVAAGFCIPINTSRGNSMLKEMESSLGYFVNYVVLPLFAFANAGVDMRGMQISYLFGPVPLGVMLGLFLGKQLGIFTFSWFLIKMNIVGMPDRANFKQLYAVAIICGIGFTMALFVDNLSYGGSDLYHHTDKLAILLGSIISGVVGYFVAKAVGNKPKKGIKNEYN.

11 helical membrane passes run 15–35 (AGIFLLAAAVFALIFSNVGFL), 60–80 (LEFWVNDALMAIFFFSIGLEL), 96–116 (FLPSFAAIGGVIFPAVIFAVI), 126–146 (GWAIPTATDIAFAVGVMALLG), 155–175 (IFVLTLAIMDDLCAIVIIALF), 179–199 (ALNFTYLGLAFVCFLVLLVMC), 207–227 (IPFVIMSILLWIFVLHSGIHA), 255–275 (SLGYFVNYVVLPLFAFANAGV), 290–312 (PLGVMLGLFLGKQLGIFTFSWFL), 329–349 (LYAVAIICGIGFTMALFVDNL), and 363–383 (LAILLGSIISGVVGYFVAKAV).

It belongs to the NhaA Na(+)/H(+) (TC 2.A.33) antiporter family.

It is found in the cell inner membrane. It carries out the reaction Na(+)(in) + 2 H(+)(out) = Na(+)(out) + 2 H(+)(in). In terms of biological role, na(+)/H(+) antiporter that extrudes sodium in exchange for external protons. This is Na(+)/H(+) antiporter NhaA 1 from Campylobacter hominis (strain ATCC BAA-381 / DSM 21671 / CCUG 45161 / LMG 19568 / NCTC 13146 / CH001A).